Reading from the N-terminus, the 409-residue chain is TNF receptor-associated factor 1 (409 aa).

Ser139 is modified (phosphoserine). Positions 167-256 (EELALQHLVK…EHSLRLMEEA (90 aa)) form a coiled coil. Glycyl lysine isopeptide (Lys-Gly) (interchain with G-Cter in ubiquitin) cross-links involve residues Lys178 and Lys186. The MATH domain maps to 259 to 405 (DGTFLWKITN…DDTMFLKCIV (147 aa)).

In terms of assembly, homotrimer. Heterotrimer with TRAF2. Interacts with TNFRSF1A/TNFR1, TNFRSF1B/TNFR2, TNFRSF4, TNFRSF5/CD40, TNFRSF8/CD30, TNFRSF9/CD137, TNFRSF11A/RANK, TNFRSF13C, TNFRSF18/AITR, TNFRSF17/BCMA, TNFRSF19/TROY, TNFRSF19L/RELT, XEDAR, EDAR, Epstein-Barr virus BNFL1/LMP-1, TANK/ITRAF, TRAIP and RIPK2. Interacts with BIRC2 and BIRC3 N-terminus; a single BIRC2 or BIRC3 molecule interacts with a heterotrimer formed by TRAF1 and TRAF2. Interacts with MAP3K14. Interacts with NFATC2IP, TRAFD1 and with HIVEP3. Interacts with GPS2. Polyubiquitinated by BIRC2 and/or BIRC3, leading to its subsequent proteasomal degradation. Ubiquitinated by the SCF(FBXL2) complex, leading to its degradation by the proteasome.

It localises to the cytoplasm. Functionally, adapter molecule that regulates the activation of NF-kappa-B and JNK. Plays a role in the regulation of cell survival and apoptosis. The heterotrimer formed by TRAF1 and TRAF2 is part of a E3 ubiquitin-protein ligase complex that promotes ubiquitination of target proteins, such as MAP3K14. The TRAF1/TRAF2 complex recruits the antiapoptotic E3 protein-ubiquitin ligases BIRC2 and BIRC3 to TNFRSF1B/TNFR2. This chain is TNF receptor-associated factor 1 (Traf1), found in Mus musculus (Mouse).